Consider the following 199-residue polypeptide: ATP-dependent Clp protease proteolytic subunit (199 aa).

The Nucleophile role is filled by Ser97. The active site involves His122.

The protein belongs to the peptidase S14 family. Fourteen ClpP subunits assemble into 2 heptameric rings which stack back to back to give a disk-like structure with a central cavity, resembling the structure of eukaryotic proteasomes.

The protein localises to the cytoplasm. The enzyme catalyses Hydrolysis of proteins to small peptides in the presence of ATP and magnesium. alpha-casein is the usual test substrate. In the absence of ATP, only oligopeptides shorter than five residues are hydrolyzed (such as succinyl-Leu-Tyr-|-NHMec, and Leu-Tyr-Leu-|-Tyr-Trp, in which cleavage of the -Tyr-|-Leu- and -Tyr-|-Trp bonds also occurs).. Cleaves peptides in various proteins in a process that requires ATP hydrolysis. Has a chymotrypsin-like activity. Plays a major role in the degradation of misfolded proteins. The protein is ATP-dependent Clp protease proteolytic subunit of Geotalea daltonii (strain DSM 22248 / JCM 15807 / FRC-32) (Geobacter daltonii).